We begin with the raw amino-acid sequence, 313 residues long: Serine/threonine-protein phosphatase PP2A-4 catalytic subunit (313 aa).

Residues aspartate 61, histidine 63, aspartate 89, and asparagine 121 each coordinate Mn(2+). Histidine 122 functions as the Proton donor in the catalytic mechanism. Mn(2+) contacts are provided by histidine 171 and histidine 245. The residue at position 313 (leucine 313) is a Leucine methyl ester.

Belongs to the PPP phosphatase family. PP-2A subfamily. In terms of assembly, PP2A consists of a common heterodimeric core enzyme, composed of a 36 kDa catalytic subunit (subunit C) and a 65 kDa constant regulatory subunit (subunit A), that associates with a variety of regulatory subunits such as subunits B (the R2/B/PR55/B55, R3/B''/PR72/PR130/PR59 and R5/B'/B56 families). Interacts with SIC/RON3. Mn(2+) is required as a cofactor. Post-translationally, reversibly methyl esterified on Leu-313 by leucine carboxyl methyltransferase 1 (LCMT1) and pectin methylesterase 1 (PME1). Carboxyl methylation influences the affinity of the catalytic subunit for the different regulatory subunits, thereby modulating the PP2A holoenzyme's substrate specificity, enzyme activity and cellular localization. Phosphorylation of either threonine (by autophosphorylation-activated protein kinase) or tyrosine results in inactivation of the phosphatase. Auto-dephosphorylation has been suggested as a mechanism for reactivation.

It is found in the cytoplasm. The catalysed reaction is O-phospho-L-seryl-[protein] + H2O = L-seryl-[protein] + phosphate. It carries out the reaction O-phospho-L-threonyl-[protein] + H2O = L-threonyl-[protein] + phosphate. Functions redundantly with PP2A3, and is involved in establishing auxin gradients, apical-basal axis of polarity and root and shoot apical meristem during embryogenesis. May dephosphorylate PIN1 and regulate its subcellular distribution for polar auxin transport. The holoenzyme composed of PP2AA1, PP2A4 and B'ZETA or B'ETA acts as a negative regulator of plant innate immunity by controlling BAK1 phosphorylation state and activation in surface-localized immune receptor complexes. In Arabidopsis thaliana (Mouse-ear cress), this protein is Serine/threonine-protein phosphatase PP2A-4 catalytic subunit.